We begin with the raw amino-acid sequence, 241 residues long: Uridylate kinase (241 aa).

Residue 15–18 coordinates ATP; sequence KLSG. Residues 23–28 are involved in allosteric activation by GTP; sequence GSEGFG. A UMP-binding site is contributed by Gly57. Positions 58 and 62 each coordinate ATP. UMP-binding positions include Asp77 and 138-145; that span reads TGNPFFTT. Thr165, Phe171, and Asp174 together coordinate ATP.

Belongs to the UMP kinase family. In terms of assembly, homohexamer.

The protein resides in the cytoplasm. The catalysed reaction is UMP + ATP = UDP + ADP. It functions in the pathway pyrimidine metabolism; CTP biosynthesis via de novo pathway; UDP from UMP (UMPK route): step 1/1. Allosterically activated by GTP. Inhibited by UTP. In terms of biological role, catalyzes the reversible phosphorylation of UMP to UDP. In Vibrio vulnificus (strain CMCP6), this protein is Uridylate kinase.